The primary structure comprises 539 residues: Cell division control protein 6 homolog (539 aa).

The disordered stretch occupies residues 1 to 40 (MPAIAGPSSSPQKHVVGSRSESIGGVRSAEVNTSRKRKLI). The Nuclear localization signal signature appears at 35 to 38 (RKRK).

This sequence belongs to the CDC6/cdc18 family. As to expression, highly expressed in roots, flower buds and etiolated seedlings. Expressed in leaves and stems. Highly expressed in proliferating cells such as root meristems, leaf primordia and young growing leaves, as well as cells undergoing endoreduplication cycles.

It localises to the nucleus. May be involved in the initiation of DNA replication. May play a role in endoreduplication. Could act as one of the factors that contributes to maintain endoreduplication competence. The sequence is that of Cell division control protein 6 homolog from Arabidopsis thaliana (Mouse-ear cress).